Consider the following 414-residue polypeptide: eIF5-mimic protein 1 (414 aa).

Positions 1–22 are disordered; the sequence is MNKNQKPVLTGQRFKTRKRDEK. In terms of domain architecture, W2 spans 248–414; sequence VQQSLGTRKE…LQNAEEEFRI (167 aa).

The protein belongs to the BZW family.

It is found in the cytoplasm. Functionally, translation initiation regulator which may repress non-AUG initiated translation and repeat-associated non-AUG (RAN) initiated translation by acting as a competitive inhibitor of eukaryotic translation initiation factor 5 (EIF5) function. This Gallus gallus (Chicken) protein is eIF5-mimic protein 1 (BZW2).